A 312-amino-acid polypeptide reads, in one-letter code: MENFKHTTVLLDEAVNGLNIRPDGIYIDGTFGRGGHSRLILSQLGEEGRLLAIDRDPQAIAVAQTINDPRFSIIHGPFSALADYVAEREFTGKIDGILLDLGVSSPQLDDAERGFSFMRDGPLDMRMDPTRGQSAAEWLQTAEEADIAWVLKTFGEERFAKRIARAIVERNREQPMTRTKELAEVVAAATPVKDKFKHPATRTFQAVRIWVNSELEEIEQALKSSLSVLAPGGRLSIISFHSLEDRIVKRFMREQSRGPQVPAGLPMTEAQRKKLGGRELRALGKLMPGEKEVAENPRARSSVLRIAERTNA.

Residues glycine 34 to histidine 36, aspartate 54, phenylalanine 78, aspartate 100, and glutamine 107 contribute to the S-adenosyl-L-methionine site.

The protein belongs to the methyltransferase superfamily. RsmH family.

The protein resides in the cytoplasm. The enzyme catalyses cytidine(1402) in 16S rRNA + S-adenosyl-L-methionine = N(4)-methylcytidine(1402) in 16S rRNA + S-adenosyl-L-homocysteine + H(+). In terms of biological role, specifically methylates the N4 position of cytidine in position 1402 (C1402) of 16S rRNA. This Salmonella choleraesuis (strain SC-B67) protein is Ribosomal RNA small subunit methyltransferase H.